Here is a 124-residue protein sequence, read N- to C-terminus: Small ribosomal subunit protein uS12 (124 aa).

Residue aspartate 89 is modified to 3-methylthioaspartic acid.

The protein belongs to the universal ribosomal protein uS12 family. As to quaternary structure, part of the 30S ribosomal subunit. Contacts proteins S8 and S17. May interact with IF1 in the 30S initiation complex.

In terms of biological role, with S4 and S5 plays an important role in translational accuracy. Its function is as follows. Interacts with and stabilizes bases of the 16S rRNA that are involved in tRNA selection in the A site and with the mRNA backbone. Located at the interface of the 30S and 50S subunits, it traverses the body of the 30S subunit contacting proteins on the other side and probably holding the rRNA structure together. The combined cluster of proteins S8, S12 and S17 appears to hold together the shoulder and platform of the 30S subunit. The polypeptide is Small ribosomal subunit protein uS12 (Yersinia pestis (strain Pestoides F)).